A 962-amino-acid polypeptide reads, in one-letter code: Voltage-gated delayed rectifier potassium channel KCNH1 (962 aa).

Residues 1–220 lie on the Cytoplasmic side of the membrane; it reads MTMAGGRRGL…LHYCVFKTTW (220 aa). In terms of domain architecture, PAS spans 14–94; that stretch reads QNTFLENIVR…QTFENYEMNS (81 aa). Positions 93–145 constitute a PAC domain; sequence NSFEILMYKKNRTPVWFFVKIAPIRNEQDKVVLFLCTFSDITAFKQPIEDDSC. Residues 151 to 162 are required for phosphatidylinositol bisphosphate binding; it reads FARLTRALTSSR. A helical transmembrane segment spans residues 221-241; that stretch reads DWIILILTFYTAILVPYNVSF. Residues 242–248 lie on the Extracellular side of the membrane; it reads KTRQNNV. A helical transmembrane segment spans residues 249–269; sequence AWLVVDSIVDVIFLVDIVLNF. At 270-290 the chain is on the cytoplasmic side; it reads HTTFVGPAGEVISDPKLIRMN. Residues 291–309 traverse the membrane as a helical segment; the sequence is YLKTWFVIDLLSCLPYDVI. Topologically, residues 310–318 are extracellular; sequence NAFENVDEG. A helical; Voltage-sensor transmembrane segment spans residues 319-341; sequence ISSLFSSLKVVRLLRLGRVARKL. Residues 342 to 350 lie on the Cytoplasmic side of the membrane; sequence DHYIEYGAA. A helical membrane pass occupies residues 351–372; that stretch reads VLVLLVCVFGLAAHWMACIWYS. Residues 373-421 are Extracellular-facing; it reads IGDYEIFDEDTKTIRNNSWLYQLALDIGTPYQFNGSGSGKWEGGPSKNS. Residues asparagine 388 and asparagine 406 are each glycosylated (N-linked (GlcNAc...) asparagine). Residues 422-443 constitute an intramembrane region (pore-forming); the sequence is VYISSLYFTMTSLTSVGFGNIA. The short motif at 436–441 is the Selectivity filter element; that stretch reads SVGFGN. Residues 444-450 lie on the Extracellular side of the membrane; sequence PSTDIEK. The chain crosses the membrane as a helical span at residues 451–471; the sequence is IFAVAIMMIGSLLYATIFGNV. Over 472 to 962 the chain is Cytoplasmic; sequence TTIFQQMYAN…ESDRDIFGAS (491 aa). The tract at residues 646 to 743 is calmodulin-binding; that stretch reads KRDALQKVLE…LDDLDVEKGN (98 aa). Residues 672-674 are interaction with cyclic nucleotide-binding pocket; that stretch reads YNL. The segment covering 830–852 has biased composition (basic and acidic residues); sequence ESMETLPERTKASGEATLKKTDS. Disordered stretches follow at residues 830–859 and 933–962; these read ESME…GITK and SRGS…FGAS. The interval 897–937 is CAD (involved in subunit assembly); that stretch reads ATVLEVKHELKEDIKALNAKMTSIEKQLSEILRILMSRGSS. Positions 934 to 952 are enriched in polar residues; that stretch reads RGSSQSPQDTCEVSRPQSP. Phosphoserine is present on residues serine 947, serine 951, and serine 954. Residues 953 to 962 are compositionally biased toward basic and acidic residues; that stretch reads ESDRDIFGAS.

It belongs to the potassium channel family. H (Eag) (TC 1.A.1.20) subfamily. Kv10.1/KCNH1 sub-subfamily. Homomultimer. The potassium channel is composed of a homo- or heterotetrameric complex of pore-forming alpha subunits that can associate with modulating beta subunits. Heteromultimer with KCNH5/EAG2. Interacts with ALG10B. Interacts with RABEP1. Interacts (via C-terminus) with CTTN. Interacts (via cytoplasmic region) with Ca(2+)-bound calmodulin. Post-translationally, channel activity is regulated via tyrosine phosphorylation/dephosphorylation by SRC and PTPN6. In terms of tissue distribution, detected in cerebellum, at parallel fiber synapses on Purkinje cell spines. Detected in hippocampus neurons (at protein level). Detected in brain, but not in the other tissues tested; expression is highest in granular cells of the dentate gyrus, in hippocampus CA3 pyramidal cells, and in cerebellar granule cells. Detected in pituitary.

The protein resides in the cell membrane. Its subcellular location is the nucleus inner membrane. It is found in the cell projection. The protein localises to the dendrite. It localises to the axon. The protein resides in the presynaptic cell membrane. Its subcellular location is the perikaryon. It is found in the postsynaptic density membrane. The protein localises to the early endosome membrane. The catalysed reaction is K(+)(in) = K(+)(out). With respect to regulation, channel activity is inhibited by interaction with Ca(2+)-bound calmodulin. Interaction of a single pore-forming alpha subunit with a calmodulin chain is sufficient to promote channel closure. Channel activity is not regulated by cyclic nucleotides. Channel activity is inhibited by binding intracellular phosphatidylinositol-3,5-bisphosphate and phosphatidylinositol-4,5-bisphosphate (PIP2), but is not inhibited by phosphatidylinositol 4-phosphate. Its function is as follows. Pore-forming (alpha) subunit of a voltage-gated delayed rectifier potassium channel that mediates outward-rectifying potassium currents which, on depolarization, reaches a steady-state level and do not inactivate. The activation kinetics depend on the prepulse potential and external divalent cation concentration. With negative prepulses, the current activation is delayed and slowed down several fold, whereas more positive prepulses speed up activation. The time course of activation is biphasic with a fast and a slowly activating current component. Activates at more positive membrane potentials and exhibit a steeper activation curve. Channel properties are modulated by subunit assembly. Mediates IK(NI) current in myoblasts. Involved in the regulation of cell proliferation and differentiation, in particular adipogenic and osteogenic differentiation in bone marrow-derived mesenchymal stem cells (MSCs). This chain is Voltage-gated delayed rectifier potassium channel KCNH1, found in Rattus norvegicus (Rat).